A 159-amino-acid chain; its full sequence is Methyl-coenzyme M reductase operon protein D (159 aa).

As to quaternary structure, MCR is composed of three subunits: alpha, beta, and gamma. The function of proteins C and D is not known.

The polypeptide is Methyl-coenzyme M reductase operon protein D (mcrD) (Methanococcus voltae).